Reading from the N-terminus, the 320-residue chain is Ferrochelatase (320 aa).

Fe cation contacts are provided by H194 and E275.

It belongs to the ferrochelatase family.

It is found in the cytoplasm. It catalyses the reaction heme b + 2 H(+) = protoporphyrin IX + Fe(2+). Its pathway is porphyrin-containing compound metabolism; protoheme biosynthesis; protoheme from protoporphyrin-IX: step 1/1. Catalyzes the ferrous insertion into protoporphyrin IX. This chain is Ferrochelatase, found in Yersinia pestis bv. Antiqua (strain Antiqua).